The following is a 341-amino-acid chain: MSEITASPRHDWTLAEVEALFALPFMELVFQAANVHRAHFDPSEIQLSQLLSVKTGGCAENCGYCSQSAHFKTGLKADKLMAADDVVAKARAARDGGAQRFCMGAAWRELKDRDLPKLTEMIGEVKALGLETCATLGMLTADQAKALKAAGLDYYNHNLDTGPDYYKDVVTTRTYQERLDTLAHVRDAGMSTCCGGIVGMGEQRRDRAGLLHQLATLPAHPDSLPINGLVPISGTPLGDKVLSEGKAIDAIEFVRTIAVARIVCPKSMVRLSAGREGMSRELQALCFMAGANSIFVGGKLLTTPLPGQDEDSQLFQDLDLKPMGGAVRVEAKADAAMVAAE.

A Radical SAM core domain is found at 43–266; sequence SEIQLSQLLS…IAVARIVCPK (224 aa). [4Fe-4S] cluster contacts are provided by Cys-58, Cys-62, and Cys-65. [2Fe-2S] cluster contacts are provided by Cys-102, Cys-133, Cys-193, and Arg-270.

This sequence belongs to the radical SAM superfamily. Biotin synthase family. As to quaternary structure, homodimer. [4Fe-4S] cluster is required as a cofactor. [2Fe-2S] cluster serves as cofactor.

The catalysed reaction is (4R,5S)-dethiobiotin + (sulfur carrier)-SH + 2 reduced [2Fe-2S]-[ferredoxin] + 2 S-adenosyl-L-methionine = (sulfur carrier)-H + biotin + 2 5'-deoxyadenosine + 2 L-methionine + 2 oxidized [2Fe-2S]-[ferredoxin]. Its pathway is cofactor biosynthesis; biotin biosynthesis; biotin from 7,8-diaminononanoate: step 2/2. Catalyzes the conversion of dethiobiotin (DTB) to biotin by the insertion of a sulfur atom into dethiobiotin via a radical-based mechanism. The chain is Biotin synthase from Caulobacter vibrioides (strain ATCC 19089 / CIP 103742 / CB 15) (Caulobacter crescentus).